A 61-amino-acid polypeptide reads, in one-letter code: Alpha-conotoxin-like PnMGMR-02 (61 aa).

The signal sequence occupies residues 1–21 (MGMRMMFTVFLLVVLATTVVS). The propeptide occupies 22-44 (FTSDRASDGGNAAASDLIALTIK). 2 disulfides stabilise this stretch: C46-C52 and C47-C60. The tract at residues 48–50 (SRP) is ser-Xaa-Pro motif, crucial for potent interaction with nAChR. Position 60 is a cysteine amide (C60).

Belongs to the conotoxin A superfamily. As to expression, expressed by the venom duct.

Its subcellular location is the secreted. Its function is as follows. Alpha-conotoxins act on postsynaptic membranes, they bind to the nicotinic acetylcholine receptors (nAChR) and thus inhibit them. This toxin blocks mammalian nAChRs (alpha-7 &gt; alpha-3/beta-2). In Conus pennaceus (Feathered cone), this protein is Alpha-conotoxin-like PnMGMR-02.